Here is a 353-residue protein sequence, read N- to C-terminus: Photosystem II protein D1 (353 aa).

N-acetylthreonine is present on threonine 2. Threonine 2 is subject to Phosphothreonine. The next 3 helical transmembrane spans lie at 29–46 (YIGWFGVLMIPTLLTATS), 118–133 (HFLLGVACYMGREWEL), and 142–156 (WIAVAYSAPVAAATA). Histidine 118 provides a ligand contact to chlorophyll a. Pheophytin a is bound at residue tyrosine 126. [CaMn4O5] cluster-binding residues include aspartate 170 and glutamate 189. A helical transmembrane segment spans residues 197 to 218 (FHMLGVAGVFGGSLFSAMHGSL). Residue histidine 198 coordinates chlorophyll a. A quinone contacts are provided by residues histidine 215 and 264-265 (SF). Histidine 215 contributes to the Fe cation binding site. Histidine 272 is a binding site for Fe cation. Residues 274–288 (FLAAWPVIGIWFTAL) form a helical membrane-spanning segment. Positions 332, 333, 342, and 344 each coordinate [CaMn4O5] cluster. Positions 345–353 (AIEAPSTNG) are excised as a propeptide.

The protein belongs to the reaction center PufL/M/PsbA/D family. As to quaternary structure, PSII is composed of 1 copy each of membrane proteins PsbA, PsbB, PsbC, PsbD, PsbE, PsbF, PsbH, PsbI, PsbJ, PsbK, PsbL, PsbM, PsbT, PsbX, PsbY, PsbZ, Psb30/Ycf12, at least 3 peripheral proteins of the oxygen-evolving complex and a large number of cofactors. It forms dimeric complexes. The cofactor is The D1/D2 heterodimer binds P680, chlorophylls that are the primary electron donor of PSII, and subsequent electron acceptors. It shares a non-heme iron and each subunit binds pheophytin, quinone, additional chlorophylls, carotenoids and lipids. D1 provides most of the ligands for the Mn4-Ca-O5 cluster of the oxygen-evolving complex (OEC). There is also a Cl(-1) ion associated with D1 and D2, which is required for oxygen evolution. The PSII complex binds additional chlorophylls, carotenoids and specific lipids.. Post-translationally, tyr-161 forms a radical intermediate that is referred to as redox-active TyrZ, YZ or Y-Z. C-terminally processed by CTPA; processing is essential to allow assembly of the oxygen-evolving complex and thus photosynthetic growth.

The protein localises to the plastid. It localises to the chloroplast thylakoid membrane. It carries out the reaction 2 a plastoquinone + 4 hnu + 2 H2O = 2 a plastoquinol + O2. Functionally, photosystem II (PSII) is a light-driven water:plastoquinone oxidoreductase that uses light energy to abstract electrons from H(2)O, generating O(2) and a proton gradient subsequently used for ATP formation. It consists of a core antenna complex that captures photons, and an electron transfer chain that converts photonic excitation into a charge separation. The D1/D2 (PsbA/PsbD) reaction center heterodimer binds P680, the primary electron donor of PSII as well as several subsequent electron acceptors. The protein is Photosystem II protein D1 of Amaranthus hybridus (Slim amaranth).